The chain runs to 238 residues: Uridylate kinase (238 aa).

12–15 (KLSG) is an ATP binding site. A UMP-binding site is contributed by Gly-54. ATP contacts are provided by Gly-55 and Arg-59. UMP is bound by residues Asp-74 and 135–142 (TGNPFFTT). ATP-binding residues include Thr-162, Tyr-168, and Asp-171.

It belongs to the UMP kinase family. In terms of assembly, homohexamer.

It localises to the cytoplasm. The catalysed reaction is UMP + ATP = UDP + ADP. It participates in pyrimidine metabolism; CTP biosynthesis via de novo pathway; UDP from UMP (UMPK route): step 1/1. Its activity is regulated as follows. Inhibited by UTP. In terms of biological role, catalyzes the reversible phosphorylation of UMP to UDP. In Aromatoleum aromaticum (strain DSM 19018 / LMG 30748 / EbN1) (Azoarcus sp. (strain EbN1)), this protein is Uridylate kinase.